The chain runs to 205 residues: Large ribosomal subunit protein bL25 (205 aa).

The tract at residues 178-205 (FPETEPVEDEESAGEDAQGESEEKAAKE) is disordered. The segment covering 182–197 (EPVEDEESAGEDAQGE) has biased composition (acidic residues).

This sequence belongs to the bacterial ribosomal protein bL25 family. CTC subfamily. In terms of assembly, part of the 50S ribosomal subunit; part of the 5S rRNA/L5/L18/L25 subcomplex. Contacts the 5S rRNA. Binds to the 5S rRNA independently of L5 and L18.

Its function is as follows. This is one of the proteins that binds to the 5S RNA in the ribosome where it forms part of the central protuberance. In Cutibacterium acnes (strain DSM 16379 / KPA171202) (Propionibacterium acnes), this protein is Large ribosomal subunit protein bL25.